The chain runs to 487 residues: Cysteine--tRNA ligase (487 aa).

Zn(2+) is bound at residue Cys-30. A 'HIGH' region motif is present at residues 32 to 42; sequence PTVYGHAHLGH. Zn(2+) contacts are provided by Cys-226, His-251, and Glu-255. A 'KMSKS' region motif is present at residues 283-287; the sequence is KMGKS. Lys-286 provides a ligand contact to ATP.

The protein belongs to the class-I aminoacyl-tRNA synthetase family. Monomer. It depends on Zn(2+) as a cofactor.

Its subcellular location is the cytoplasm. It carries out the reaction tRNA(Cys) + L-cysteine + ATP = L-cysteinyl-tRNA(Cys) + AMP + diphosphate. The sequence is that of Cysteine--tRNA ligase (cysS) from Chlorobaculum tepidum (strain ATCC 49652 / DSM 12025 / NBRC 103806 / TLS) (Chlorobium tepidum).